A 150-amino-acid polypeptide reads, in one-letter code: C-type lectin mosGCTL-7 (150 aa).

Positions 1–17 (MQLVHVLVVLLSVVAHA) are cleaved as a signal peptide. One can recognise a C-type lectin domain in the interval 18–140 (KKFFIPNLKA…CRGFKAYIVC (123 aa)). N67 carries an N-linked (GlcNAc...) asparagine glycan. The cysteines at positions 111 and 131 are disulfide-linked.

Interacts with putative receptor-type tyrosine-protein phosphatase mosPTP-1; the interaction probably mediates the recruitment of Japanese encephalitis virus particles in complex with C-type lectin mosGCTL-7 to the cell surface. As to quaternary structure, (Microbial infection) Interacts with envelope protein E (glycosylated) of Japanese encephalitis virus in a calcium-dependent manner.

The protein resides in the secreted. Carbohydrate-binding protein. Functionally, (Microbial infection) Facilitates Japanese encephalitis virus infection in mosquitoes probably via capturing viral particles and presenting them to a ligand on the cell surface, thereby facilitating viral entry. The sequence is that of C-type lectin mosGCTL-7 from Aedes aegypti (Yellowfever mosquito).